The primary structure comprises 452 residues: Phosphoglucosamine mutase (452 aa).

Ser-101 serves as the catalytic Phosphoserine intermediate. The Mg(2+) site is built by Ser-101, Asp-241, Asp-243, and Asp-245. Residue Ser-101 is modified to Phosphoserine.

It belongs to the phosphohexose mutase family. Requires Mg(2+) as cofactor. Post-translationally, activated by phosphorylation.

It catalyses the reaction alpha-D-glucosamine 1-phosphate = D-glucosamine 6-phosphate. In terms of biological role, catalyzes the conversion of glucosamine-6-phosphate to glucosamine-1-phosphate. This Lactococcus lactis subsp. cremoris (strain MG1363) protein is Phosphoglucosamine mutase.